A 985-amino-acid polypeptide reads, in one-letter code: Ephrin type-A receptor 4-B (985 aa).

The first 20 residues, 1–20, serve as a signal peptide directing secretion; sequence MAGIVHGILFCGLFGLCWAV. The Extracellular portion of the chain corresponds to 21 to 547; that stretch reads TGSRIYPASE…MIGEGTSPTV (527 aa). Residues 30–209 form the Eph LBD domain; the sequence is EVTLLDSRSV…FYKKCPLTVR (180 aa). 2 Fibronectin type-III domains span residues 328-438 and 439-536; these read PPSA…TNQA and APST…TVPS. N340 and N407 each carry an N-linked (GlcNAc...) asparagine glycan. The helical transmembrane segment at 548 to 569 threads the bilayer; sequence LLVSVAGSIVLVVILIAAFVIS. Topologically, residues 570 to 985 are cytoplasmic; sequence RRRSKYSKAK…QQMQGRMVPV (416 aa). 2 positions are modified to phosphotyrosine; by autocatalysis: Y595 and Y601. The Protein kinase domain maps to 620 to 881; that stretch reads IKIEKVIGVG…QIVSMLDKLI (262 aa). Residues 626-634 and K652 each bind ATP; that span reads IGVGEFGEV. The active-site Proton acceptor is D745. 2 positions are modified to phosphotyrosine; by autocatalysis: Y778 and Y927. The 65-residue stretch at 910-974 folds into the SAM domain; sequence SQVASVLDWL…LSSVQGMRTQ (65 aa). The PDZ-binding motif lies at 983–985; sequence VPV.

It belongs to the protein kinase superfamily. Tyr protein kinase family. Ephrin receptor subfamily. In terms of tissue distribution, localized expression in a subset of neural crest and neural tissues in embryos.

The protein localises to the cell membrane. Its subcellular location is the early endosome. It catalyses the reaction L-tyrosyl-[protein] + ATP = O-phospho-L-tyrosyl-[protein] + ADP + H(+). Functionally, receptor tyrosine kinase which binds membrane-bound ephrin family ligands residing on adjacent cells, leading to contact-dependent bidirectional signaling into neighboring cells. The signaling pathway downstream of the receptor is referred to as forward signaling while the signaling pathway downstream of the ephrin ligand is referred to as reverse signaling. Highly promiscuous, it has the unique property among Eph receptors to bind and to be physiologically activated by both GPI-anchored ephrin-A and transmembrane ephrin-B ligands including EFNA1 and EFNB3. Upon activation by ephrin ligands, modulates cell morphology and integrin-dependent cell adhesion through regulation of the Rac, Rap and Rho GTPases activity. Plays an important role in the development of the nervous system controlling different steps of axonal guidance including the establishment of the corticospinal projections. The sequence is that of Ephrin type-A receptor 4-B (epha4-b) from Xenopus laevis (African clawed frog).